The chain runs to 458 residues: GTPase Der (458 aa).

EngA-type G domains are found at residues 9–171 (KTIA…DLNQ) and 197–368 (IQVG…ECFS). GTP is bound by residues 15 to 22 (GQPNVGKS), 62 to 66 (DTGGM), 123 to 126 (NKID), 203 to 210 (GRVNVGKS), 250 to 254 (DTAGI), and 314 to 317 (NKWD). The 85-residue stretch at 369–453 (KRIPTSLLNS…PLILNAKDKK (85 aa)) folds into the KH-like domain.

This sequence belongs to the TRAFAC class TrmE-Era-EngA-EngB-Septin-like GTPase superfamily. EngA (Der) GTPase family. In terms of assembly, associates with the 50S ribosomal subunit.

In terms of biological role, GTPase that plays an essential role in the late steps of ribosome biogenesis. The polypeptide is GTPase Der (Helicobacter pylori (strain ATCC 700392 / 26695) (Campylobacter pylori)).